A 190-amino-acid chain; its full sequence is Peptidyl-tRNA hydrolase (190 aa).

Tyr18 contacts tRNA. The Proton acceptor role is filled by His23. The tRNA site is built by Phe65, Asn67, and Asn113.

The protein belongs to the PTH family. As to quaternary structure, monomer.

The protein resides in the cytoplasm. The enzyme catalyses an N-acyl-L-alpha-aminoacyl-tRNA + H2O = an N-acyl-L-amino acid + a tRNA + H(+). Functionally, hydrolyzes ribosome-free peptidyl-tRNAs (with 1 or more amino acids incorporated), which drop off the ribosome during protein synthesis, or as a result of ribosome stalling. Its function is as follows. Catalyzes the release of premature peptidyl moieties from peptidyl-tRNA molecules trapped in stalled 50S ribosomal subunits, and thus maintains levels of free tRNAs and 50S ribosomes. In Akkermansia muciniphila (strain ATCC BAA-835 / DSM 22959 / JCM 33894 / BCRC 81048 / CCUG 64013 / CIP 107961 / Muc), this protein is Peptidyl-tRNA hydrolase.